The following is a 486-amino-acid chain: MTFIEGKTEKWEYVIGLEIHAQIKSNAKLFSSASTEFGSSPNSQVELLDAAMPGSLPVLNEFCVHQAIKTALGINAKINKLSIFDRKNYFYADLPAGYQISQFYHPIAQGGWIEILDENGNIKCIQINRLHIEQDTGKSTHDQSDTYSYIDLNRSGIALMEIVSEPDISSPMQAAEYIKKLRAILRYLDSCNGDMEKGALRCDANISVRKPNSELGTKCEIKNLNSIKSIVRALEFEGQRQVNILESGGTVKQESLLFDATLGKTFPMRSKENATDYRYFPDPDLPPIILDQSLIDNIASSLPELPDAKITRYVNEIKLSDYNAQVLAADKDISCFFEEVIKTANPILTANWILSELFGLMNKDGITINECKITANHFSELIQLISSKAISSKIAKTVLKEMFDSGKSPKIIMQEKNIQQISDPNQIADIIDDVLKDNYQSVVSYRNGKDRLFGFFVGQVMKKTAGNANPELINEILHTKLKQFQI.

This sequence belongs to the GatB/GatE family. GatB subfamily. As to quaternary structure, heterotrimer of A, B and C subunits.

The enzyme catalyses L-glutamyl-tRNA(Gln) + L-glutamine + ATP + H2O = L-glutaminyl-tRNA(Gln) + L-glutamate + ADP + phosphate + H(+). The catalysed reaction is L-aspartyl-tRNA(Asn) + L-glutamine + ATP + H2O = L-asparaginyl-tRNA(Asn) + L-glutamate + ADP + phosphate + 2 H(+). Allows the formation of correctly charged Asn-tRNA(Asn) or Gln-tRNA(Gln) through the transamidation of misacylated Asp-tRNA(Asn) or Glu-tRNA(Gln) in organisms which lack either or both of asparaginyl-tRNA or glutaminyl-tRNA synthetases. The reaction takes place in the presence of glutamine and ATP through an activated phospho-Asp-tRNA(Asn) or phospho-Glu-tRNA(Gln). The chain is Aspartyl/glutamyl-tRNA(Asn/Gln) amidotransferase subunit B from Orientia tsutsugamushi (strain Boryong) (Rickettsia tsutsugamushi).